The following is a 256-amino-acid chain: Triosephosphate isomerase (256 aa).

9 to 11 contributes to the substrate binding site; it reads NWK. Histidine 96 acts as the Electrophile in catalysis. Glutamate 168 functions as the Proton acceptor in the catalytic mechanism. Substrate is bound by residues serine 213 and 234 to 235; that span reads GG.

The protein belongs to the triosephosphate isomerase family. Homodimer.

It localises to the cytoplasm. It carries out the reaction D-glyceraldehyde 3-phosphate = dihydroxyacetone phosphate. It participates in carbohydrate biosynthesis; gluconeogenesis. Its pathway is carbohydrate degradation; glycolysis; D-glyceraldehyde 3-phosphate from glycerone phosphate: step 1/1. In terms of biological role, involved in the gluconeogenesis. Catalyzes stereospecifically the conversion of dihydroxyacetone phosphate (DHAP) to D-glyceraldehyde-3-phosphate (G3P). The protein is Triosephosphate isomerase of Baumannia cicadellinicola subsp. Homalodisca coagulata.